The chain runs to 86 residues: Small ribosomal subunit protein uS15 (86 aa).

Over residues 1–10 the composition is skewed to polar residues; it reads MSIDTQSIIE. The disordered stretch occupies residues 1–21; the sequence is MSIDTQSIIENNKRSAHDTGS.

The protein belongs to the universal ribosomal protein uS15 family. Part of the 30S ribosomal subunit. Forms a bridge to the 50S subunit in the 70S ribosome, contacting the 23S rRNA.

In terms of biological role, one of the primary rRNA binding proteins, it binds directly to 16S rRNA where it helps nucleate assembly of the platform of the 30S subunit by binding and bridging several RNA helices of the 16S rRNA. Functionally, forms an intersubunit bridge (bridge B4) with the 23S rRNA of the 50S subunit in the ribosome. In Xylella fastidiosa (strain M23), this protein is Small ribosomal subunit protein uS15.